A 170-amino-acid polypeptide reads, in one-letter code: Type IV pilus assembly protein C (170 aa).

An N-terminal signal peptide occupies residues 1 to 23 (MKSKLPLILINLSLISSPLGANA). Residues 87–107 (KTVSKPAKSNTPPQQAPVNNS) are disordered. The segment covering 93 to 107 (AKSNTPPQQAPVNNS) has biased composition (polar residues). Residues 109-166 (RSILEAELSNERKALTEAQKMLSQARLAKGGNINHQKINALQSNVLDRQQNIQALQRE) are a coiled coil.

Its subcellular location is the periplasm. Required for stabilizing type IV pilus (T4p) in extended, nonretracted conformation on the bacterial cell surface. The protein is Type IV pilus assembly protein C of Neisseria gonorrhoeae (strain ATCC 700825 / FA 1090).